A 320-amino-acid chain; its full sequence is 1,5-anhydro-D-fructose reductase (320 aa).

Residue Asp-35 participates in NADP(+) binding. Catalysis depends on Tyr-40, which acts as the Proton donor. Position 102 (His-102) interacts with substrate. NADP(+) contacts are provided by residues Gln-194 and 265-277 (IPGS…IKEN).

The protein belongs to the aldo/keto reductase family. In terms of assembly, monomer. As to expression, specifically expressed in testis. Expressed in testicular germ cells and testis interstitial cells.

It is found in the cytoplasm. The enzyme catalyses 1,5-anhydro-D-glucitol + NADP(+) = 1,5-anhydro-D-fructose + NADPH + H(+). Its activity is regulated as follows. Inhibited by p-chloromercuribenzoic acid and alkyliodines. Catalyzes the NADPH-dependent reduction of 1,5-anhydro-D-fructose (AF) to 1,5-anhydro-D-glucitol. Has low NADPH-dependent reductase activity towards 9,10-phenanthrenequinone (in vitro). In Homo sapiens (Human), this protein is 1,5-anhydro-D-fructose reductase (AKR1E2).